Here is a 61-residue protein sequence, read N- to C-terminus: Potassium channel toxin alpha-KTx 6.9 (61 aa).

The signal sequence occupies residues 1–23 (MNAKFILLLLVVTTTTLLPDAKG). 4 cysteine pairs are disulfide-bonded: cysteine 29–cysteine 50, cysteine 35–cysteine 55, cysteine 39–cysteine 57, and cysteine 45–cysteine 60.

This sequence belongs to the short scorpion toxin superfamily. Potassium channel inhibitor family. Alpha-KTx 06 subfamily. In terms of tissue distribution, expressed by the venom gland.

It is found in the secreted. Inhibits Kv1.2/KCNA2 and Kv1.3/KCNA3 voltage-gated potassium channels. The sequence is that of Potassium channel toxin alpha-KTx 6.9 from Opistophthalmus carinatus (African yellow leg scorpion).